Reading from the N-terminus, the 188-residue chain is Elongation factor P (188 aa).

It belongs to the elongation factor P family.

The protein resides in the cytoplasm. The protein operates within protein biosynthesis; polypeptide chain elongation. In terms of biological role, involved in peptide bond synthesis. Stimulates efficient translation and peptide-bond synthesis on native or reconstituted 70S ribosomes in vitro. Probably functions indirectly by altering the affinity of the ribosome for aminoacyl-tRNA, thus increasing their reactivity as acceptors for peptidyl transferase. The polypeptide is Elongation factor P (Anaplasma marginale (strain St. Maries)).